A 301-amino-acid polypeptide reads, in one-letter code: Ornithine carbamoyltransferase (301 aa).

Carbamoyl phosphate-binding positions include 47–50 (STRT), Gln-74, Arg-98, and 125–128 (HPCQ). Residues Asn-156, Asp-220, and 224-225 (SM) each bind L-ornithine. Carbamoyl phosphate contacts are provided by residues 260–261 (CL) and Arg-288.

This sequence belongs to the aspartate/ornithine carbamoyltransferase superfamily. OTCase family.

It localises to the cytoplasm. It catalyses the reaction carbamoyl phosphate + L-ornithine = L-citrulline + phosphate + H(+). It participates in amino-acid biosynthesis; L-arginine biosynthesis; L-arginine from L-ornithine and carbamoyl phosphate: step 1/3. Reversibly catalyzes the transfer of the carbamoyl group from carbamoyl phosphate (CP) to the N(epsilon) atom of ornithine (ORN) to produce L-citrulline. The polypeptide is Ornithine carbamoyltransferase (Methanobrevibacter smithii (strain ATCC 35061 / DSM 861 / OCM 144 / PS)).